A 198-amino-acid polypeptide reads, in one-letter code: Uracil phosphoribosyltransferase homolog (198 aa).

The protein belongs to the UPRTase family.

The protein localises to the plastid. It localises to the chloroplast. The chain is Uracil phosphoribosyltransferase homolog from Porphyra purpurea (Red seaweed).